We begin with the raw amino-acid sequence, 184 residues long: dCTP deaminase (184 aa).

Residues 97-102 and Asp-113 contribute to the dCTP site; that span reads RSTFAR. The Proton donor/acceptor role is filled by Glu-123. Positions 155 and 162 each coordinate dCTP.

Belongs to the dCTP deaminase family. As to quaternary structure, homotrimer.

It catalyses the reaction dCTP + H2O + H(+) = dUTP + NH4(+). It functions in the pathway pyrimidine metabolism; dUMP biosynthesis; dUMP from dCTP (dUTP route): step 1/2. In terms of biological role, catalyzes the deamination of dCTP to dUTP. This chain is dCTP deaminase, found in Saccharolobus solfataricus (strain ATCC 35092 / DSM 1617 / JCM 11322 / P2) (Sulfolobus solfataricus).